Here is a 118-residue protein sequence, read N- to C-terminus: Basic leucine zipper transcriptional factor ATF-like 3 (118 aa).

The interval 1-69 is disordered; that stretch reads MSQGPPAVSV…HESLEQENSV (69 aa). Residues serine 2 and serine 24 each carry the phosphoserine modification. The region spanning 28 to 91 is the bZIP domain; sequence DDRKVRRREK…RHLSEVLKEH (64 aa). The tract at residues 30–55 is basic motif; that stretch reads RKVRRREKNRVAAQRSRKKQTQKADK. The segment covering 51 to 69 has biased composition (basic and acidic residues); it reads QKADKLHEEHESLEQENSV. The leucine-zipper stretch occupies residues 56-84; it reads LHEEHESLEQENSVLRREISKLKEELRHL.

Belongs to the bZIP family. As to quaternary structure, heterodimer; heterodimerizes with JUN family proteins. Interacts with JUN. As to expression, highly expressed in CD8-alpha(+) classical dendritic cells (cDCs), with low to absent expression in other immune cells and non-immune tissues.

It localises to the nucleus. In terms of biological role, AP-1 family transcription factor that controls the differentiation of CD8(+) thymic conventional dendritic cells in the immune system. Acts via the formation of a heterodimer with JUN family proteins that recognizes and binds DNA sequence 5'-TGA[CG]TCA-3' and regulates expression of target genes. Required for development of CD8-alpha(+) classical dendritic cells (cDCs) and related CD103(+) dendritic cells that cross-present antigens to CD8 T-cells and produce interleukin-12 (IL12) in response to pathogens. The protein is Basic leucine zipper transcriptional factor ATF-like 3 (Batf3) of Mus musculus (Mouse).